Consider the following 358-residue polypeptide: Phosphoserine aminotransferase (358 aa).

Arginine 43 contributes to the L-glutamate binding site. Pyridoxal 5'-phosphate is bound by residues tryptophan 103, threonine 153, aspartate 172, and glutamine 195. Position 196 is an N6-(pyridoxal phosphate)lysine (lysine 196). 236 to 237 (NT) contacts pyridoxal 5'-phosphate.

This sequence belongs to the class-V pyridoxal-phosphate-dependent aminotransferase family. SerC subfamily. In terms of assembly, homodimer. Requires pyridoxal 5'-phosphate as cofactor.

The protein localises to the cytoplasm. It catalyses the reaction O-phospho-L-serine + 2-oxoglutarate = 3-phosphooxypyruvate + L-glutamate. The enzyme catalyses 4-(phosphooxy)-L-threonine + 2-oxoglutarate = (R)-3-hydroxy-2-oxo-4-phosphooxybutanoate + L-glutamate. It functions in the pathway amino-acid biosynthesis; L-serine biosynthesis; L-serine from 3-phospho-D-glycerate: step 2/3. Its pathway is cofactor biosynthesis; pyridoxine 5'-phosphate biosynthesis; pyridoxine 5'-phosphate from D-erythrose 4-phosphate: step 3/5. Catalyzes the reversible conversion of 3-phosphohydroxypyruvate to phosphoserine and of 3-hydroxy-2-oxo-4-phosphonooxybutanoate to phosphohydroxythreonine. This is Phosphoserine aminotransferase from Dichelobacter nodosus (strain VCS1703A).